The primary structure comprises 144 residues: Acylphosphatase-like protein MJ1331 (144 aa).

An Acylphosphatase-like domain is found at 8–100 (TYELRIYGNV…FPNGLNKIST (93 aa)).

In Methanocaldococcus jannaschii (strain ATCC 43067 / DSM 2661 / JAL-1 / JCM 10045 / NBRC 100440) (Methanococcus jannaschii), this protein is Acylphosphatase-like protein MJ1331.